A 691-amino-acid chain; its full sequence is Inactive TPR repeat-containing thioredoxin TTL3 (691 aa).

2 disordered regions span residues 1 to 153 (MSHS…AVSP) and 174 to 209 (MASRTSSRTETLCTGTGNYGHGNVVRSGGGGGTSGK). At S8 the chain carries Phosphoserine. The segment covering 19 to 39 (RFRDLQRNDDDVNKPDFRELD) has biased composition (basic and acidic residues). Phosphoserine occurs at positions 42 and 45. Residues 51 to 79 (GSASSSAAATPTSSSGSSGSASGKPSVSS) show a composition bias toward low complexity. The segment covering 83–93 (KRLDDAYKSHS) has biased composition (basic and acidic residues). Polar residues-rich tracts occupy residues 94–108 (GELSSPGSGMPTTTR), 118–140 (SSTGTPLIFSGSSFTSATSHTSP), and 175–189 (ASRTSSRTETLCTGT). TPR repeat units lie at residues 220-253 (PEELKRMGNDMYRRGSFSEALSLYDRAILISPGN), 255-287 (AYRSNRAAALTALRRLGEAVKECLEAVRIDPSY), 289-321 (RAHQRLASLYLRLGEAENARRHICFSGQCPDQA), 327-362 (QTLEKHLRRCWEARKIGDWKTAIKETDAAIANGADS), 412-445 (AYVLCIQAQVDMALGRFENAVVKAERAAMLDQTN), 458-491 (VVRARTRGNELFSSGRFSEACVAYGDGLKQDDSN), 492-525 (SVLYCNRAACWYKLGLWEKSVEDCNHALKSQPSY), and 527-559 (KALLRRAASYGKLGRWEDAVKDYEFLRRELPGD). A Thioredoxin domain is found at 596-683 (DKFKKSVALP…MVCPSHQFLE (88 aa)).

In terms of assembly, interacts with BRL2. Expressed in embryos and organ primordia in shoot and root. In primary and cauline leaves and petals, is expressed in hydathodes, guard cells, petiole cells and cells associated with differentiating vascular bundles.

Its function is as follows. Involved in osmotic and salt stress tolerance. May play a role in the control of meristematic cell size during osmotic stress. May function as an adapter protein for BRL2 and may be required for signaling affecting leaf vascular tissue pattern formation. This Arabidopsis thaliana (Mouse-ear cress) protein is Inactive TPR repeat-containing thioredoxin TTL3.